The following is a 92-amino-acid chain: Small ribosomal subunit protein uS19 (92 aa).

Belongs to the universal ribosomal protein uS19 family.

Its function is as follows. Protein S19 forms a complex with S13 that binds strongly to the 16S ribosomal RNA. This Caulobacter vibrioides (strain ATCC 19089 / CIP 103742 / CB 15) (Caulobacter crescentus) protein is Small ribosomal subunit protein uS19.